The primary structure comprises 1761 residues: Lysine-specific demethylase 3B (1761 aa).

Alanine 2 carries the N-acetylalanine modification. Residues 253–346 form a disordered region; the sequence is DNSAPQSEGG…QRAKQPPSTF (94 aa). A compositionally biased stretch (basic and acidic residues) spans 298–309; sequence ASKKLKGDRGEV. At lysine 361 the chain carries N6-acetyllysine. Disordered regions lie at residues 370–394 and 438–496; these read QDEPVGGDTPASFTPYSTATGQTPL and DTGL…NGVL. Composition is skewed to polar residues over residues 380 to 392, 453 to 468, and 477 to 495; these read ASFTPYSTATGQT, SRSQASGENSRNSILA, and PSSSQPLTFGSGRSQSNGV. Serine 492, serine 546, serine 556, and serine 560 each carry phosphoserine. The segment at 572 to 603 is disordered; it reads RSVLGTDTKPGSKAGSSVDRKVPAESMPTLTP. Threonine 614 carries the post-translational modification Phosphothreonine. Residues 714–762 are disordered; the sequence is GPSLSAMGNGRSSSPTSSLTQPIEMPTLSSSPTEERPTVGPGQQDNPLL. Residues 723-745 show a composition bias toward polar residues; it reads GRSSSPTSSLTQPIEMPTLSSSP. Serine 766, serine 773, serine 778, and serine 779 each carry phosphoserine. A Glycyl lysine isopeptide (Lys-Gly) (interchain with G-Cter in SUMO2) cross-link involves residue lysine 788. Serine 798 is modified (phosphoserine). Positions 805-827 are disordered; it reads ACRQDSDSSTNSDLSDLSDSEEQ. The C6-type zinc-finger motif lies at 1031-1056; the sequence is CDVCETTLFNIHWVCRKCGFGVCLDC. Residues 1142–1161 show a composition bias toward polar residues; sequence GMSQLPSINPSASSGNETTF. Positions 1142–1220 are disordered; that stretch reads GMSQLPSINP…PCPDTAPPSS (79 aa). Residues 1174 to 1193 are compositionally biased toward basic and acidic residues; sequence EPDHVPKADSTDIRSEEPLK. Positions 1194–1204 are enriched in polar residues; it reads TDSSASNSNSE. Residues serine 1253 and serine 1259 each carry the phosphoserine modification. An LXXLL motif motif is present at residues 1293–1297; that stretch reads LRDLL. In terms of domain architecture, JmjC spans 1498–1721; the sequence is MPTRFEDLME…HCFRLTQEFR (224 aa). Fe cation-binding residues include histidine 1560, aspartate 1562, and histidine 1689.

This sequence belongs to the JHDM2 histone demethylase family. Fe(2+) is required as a cofactor. In terms of tissue distribution, ubiquitous. Highly expressed in placenta, skeletal muscle, kidney, heart and liver.

It is found in the nucleus. It catalyses the reaction N(6),N(6)-dimethyl-L-lysyl(9)-[histone H3] + 2 2-oxoglutarate + 2 O2 = L-lysyl(9)-[histone H3] + 2 formaldehyde + 2 succinate + 2 CO2. Functionally, histone demethylase that specifically demethylates 'Lys-9' of histone H3, thereby playing a central role in histone code. Demethylation of Lys residue generates formaldehyde and succinate. May have tumor suppressor activity. This chain is Lysine-specific demethylase 3B (KDM3B), found in Homo sapiens (Human).